Consider the following 212-residue polypeptide: Translation initiation factor IF-3 (212 aa).

A disordered region spans residues 168–212 (MAPKAPASPKKDKADRPEGDAGDTDMAAPAPAPAAAPETESAPSA). Positions 176-186 (PKKDKADRPEG) are enriched in basic and acidic residues. Residues 194–212 (AAPAPAPAAAPETESAPSA) show a composition bias toward low complexity.

Belongs to the IF-3 family. In terms of assembly, monomer.

It localises to the cytoplasm. Its function is as follows. IF-3 binds to the 30S ribosomal subunit and shifts the equilibrium between 70S ribosomes and their 50S and 30S subunits in favor of the free subunits, thus enhancing the availability of 30S subunits on which protein synthesis initiation begins. The polypeptide is Translation initiation factor IF-3 (Deinococcus radiodurans (strain ATCC 13939 / DSM 20539 / JCM 16871 / CCUG 27074 / LMG 4051 / NBRC 15346 / NCIMB 9279 / VKM B-1422 / R1)).